The sequence spans 93 residues: UPF0369 protein RC0209 (93 aa).

The interval methionine 1–glutamate 24 is disordered. Positions arginine 8–serine 55 constitute an RPE1 insert domain.

The protein belongs to the SDHAF4 family.

This chain is UPF0369 protein RC0209, found in Rickettsia conorii (strain ATCC VR-613 / Malish 7).